The primary structure comprises 391 residues: Chalcone synthase (391 aa).

The active site involves Cys164.

This sequence belongs to the thiolase-like superfamily. Chalcone/stilbene synthases family.

The catalysed reaction is (E)-4-coumaroyl-CoA + 3 malonyl-CoA + 3 H(+) = 2',4,4',6'-tetrahydroxychalcone + 3 CO2 + 4 CoA. It functions in the pathway secondary metabolite biosynthesis; flavonoid biosynthesis. The primary product of this enzyme is 4,2',4',6'-tetrahydroxychalcone (also termed naringenin-chalcone or chalcone) which can under specific conditions spontaneously isomerize into naringenin. The sequence is that of Chalcone synthase (CHS) from Dianthus caryophyllus (Carnation).